The sequence spans 399 residues: Glutamyl-tRNA reductase (399 aa).

Substrate-binding positions include 45-48 (TCNR), Ser93, 98-100 (EDQ), and Gln104. Cys46 acts as the Nucleophile in catalysis. 173 to 178 (GAGKMG) provides a ligand contact to NADP(+).

Belongs to the glutamyl-tRNA reductase family. In terms of assembly, homodimer.

The catalysed reaction is (S)-4-amino-5-oxopentanoate + tRNA(Glu) + NADP(+) = L-glutamyl-tRNA(Glu) + NADPH + H(+). It participates in porphyrin-containing compound metabolism; protoporphyrin-IX biosynthesis; 5-aminolevulinate from L-glutamyl-tRNA(Glu): step 1/2. Catalyzes the NADPH-dependent reduction of glutamyl-tRNA(Glu) to glutamate 1-semialdehyde (GSA). The polypeptide is Glutamyl-tRNA reductase (Methanobrevibacter smithii (strain ATCC 35061 / DSM 861 / OCM 144 / PS)).